The primary structure comprises 486 residues: Membrane-bound lytic murein transglycosylase F (486 aa).

The first 29 residues, 1–29, serve as a signal peptide directing secretion; it reads MFSPTALRPRYAKWLIATGLFLMLSGCVD. Residues 30–267 are non-LT domain; that stretch reads KPNTLERVKE…RLKDRYYGHV (238 aa). The interval 268-486 is LT domain; it reads DVLGYMGATT…SKPAQEPAPL (219 aa). Residue E314 is part of the active site.

In the N-terminal section; belongs to the bacterial solute-binding protein 3 family. It in the C-terminal section; belongs to the transglycosylase Slt family.

Its subcellular location is the cell outer membrane. The enzyme catalyses Exolytic cleavage of the (1-&gt;4)-beta-glycosidic linkage between N-acetylmuramic acid (MurNAc) and N-acetylglucosamine (GlcNAc) residues in peptidoglycan, from either the reducing or the non-reducing ends of the peptidoglycan chains, with concomitant formation of a 1,6-anhydrobond in the MurNAc residue.. In terms of biological role, murein-degrading enzyme that degrades murein glycan strands and insoluble, high-molecular weight murein sacculi, with the concomitant formation of a 1,6-anhydromuramoyl product. Lytic transglycosylases (LTs) play an integral role in the metabolism of the peptidoglycan (PG) sacculus. Their lytic action creates space within the PG sacculus to allow for its expansion as well as for the insertion of various structures such as secretion systems and flagella. The chain is Membrane-bound lytic murein transglycosylase F from Pseudomonas fluorescens (strain Pf0-1).